We begin with the raw amino-acid sequence, 335 residues long: Acetyl-coenzyme A carboxylase carboxyl transferase subunit alpha (335 aa).

Positions 40 to 294 (QLETLAARRR…KEAIEKHLNA (255 aa)) constitute a CoA carboxyltransferase C-terminal domain.

It belongs to the AccA family. As to quaternary structure, acetyl-CoA carboxylase is a heterohexamer composed of biotin carboxyl carrier protein (AccB), biotin carboxylase (AccC) and two subunits each of ACCase subunit alpha (AccA) and ACCase subunit beta (AccD).

It localises to the cytoplasm. The catalysed reaction is N(6)-carboxybiotinyl-L-lysyl-[protein] + acetyl-CoA = N(6)-biotinyl-L-lysyl-[protein] + malonyl-CoA. It participates in lipid metabolism; malonyl-CoA biosynthesis; malonyl-CoA from acetyl-CoA: step 1/1. Component of the acetyl coenzyme A carboxylase (ACC) complex. First, biotin carboxylase catalyzes the carboxylation of biotin on its carrier protein (BCCP) and then the CO(2) group is transferred by the carboxyltransferase to acetyl-CoA to form malonyl-CoA. The polypeptide is Acetyl-coenzyme A carboxylase carboxyl transferase subunit alpha (Prochlorococcus marinus (strain MIT 9215)).